We begin with the raw amino-acid sequence, 220 residues long: Adenylate kinase (220 aa).

An ATP-binding site is contributed by 10–15 (GSGKST). Residues 30–59 (ASGDIIRAEIKARTPLGIEMERYLSRGDLI) are NMP. AMP is bound by residues R36, 57 to 59 (DLI), 83 to 86 (GYPR), and Q90. The LID stretch occupies residues 124 to 161 (GRRICSKCGAVYHVEFNPPKVPGKCDICGGELIQRPDD). Residue R125 coordinates ATP. Residues C128 and C131 each coordinate Zn(2+). 134–135 (VY) is an ATP binding site. C148 and C151 together coordinate Zn(2+). AMP-binding residues include R158 and R169. G197 contacts ATP.

The protein belongs to the adenylate kinase family. In terms of assembly, monomer.

The protein localises to the cytoplasm. It carries out the reaction AMP + ATP = 2 ADP. It functions in the pathway purine metabolism; AMP biosynthesis via salvage pathway; AMP from ADP: step 1/1. In terms of biological role, catalyzes the reversible transfer of the terminal phosphate group between ATP and AMP. Plays an important role in cellular energy homeostasis and in adenine nucleotide metabolism. In Pyrococcus abyssi (strain GE5 / Orsay), this protein is Adenylate kinase.